Here is a 354-residue protein sequence, read N- to C-terminus: Uroporphyrinogen decarboxylase (354 aa).

Residues 27 to 31 (RQAGR), Asp-77, Tyr-154, Thr-209, and His-327 contribute to the substrate site.

This sequence belongs to the uroporphyrinogen decarboxylase family. Homodimer.

It is found in the cytoplasm. It carries out the reaction uroporphyrinogen III + 4 H(+) = coproporphyrinogen III + 4 CO2. The protein operates within porphyrin-containing compound metabolism; protoporphyrin-IX biosynthesis; coproporphyrinogen-III from 5-aminolevulinate: step 4/4. Its function is as follows. Catalyzes the decarboxylation of four acetate groups of uroporphyrinogen-III to yield coproporphyrinogen-III. This chain is Uroporphyrinogen decarboxylase, found in Salmonella paratyphi B (strain ATCC BAA-1250 / SPB7).